A 434-amino-acid chain; its full sequence is Glutamate-1-semialdehyde 2,1-aminomutase (434 aa).

The residue at position 271 (lysine 271) is an N6-(pyridoxal phosphate)lysine.

It belongs to the class-III pyridoxal-phosphate-dependent aminotransferase family. HemL subfamily. Homodimer. The cofactor is pyridoxal 5'-phosphate.

It is found in the cytoplasm. It catalyses the reaction (S)-4-amino-5-oxopentanoate = 5-aminolevulinate. The protein operates within porphyrin-containing compound metabolism; protoporphyrin-IX biosynthesis; 5-aminolevulinate from L-glutamyl-tRNA(Glu): step 2/2. It participates in porphyrin-containing compound metabolism; chlorophyll biosynthesis. The sequence is that of Glutamate-1-semialdehyde 2,1-aminomutase from Prochlorococcus marinus (strain MIT 9312).